A 336-amino-acid chain; its full sequence is Phosphate acyltransferase (336 aa).

Belongs to the PlsX family. As to quaternary structure, homodimer. Probably interacts with PlsY.

It is found in the cytoplasm. The catalysed reaction is a fatty acyl-[ACP] + phosphate = an acyl phosphate + holo-[ACP]. Its pathway is lipid metabolism; phospholipid metabolism. In terms of biological role, catalyzes the reversible formation of acyl-phosphate (acyl-PO(4)) from acyl-[acyl-carrier-protein] (acyl-ACP). This enzyme utilizes acyl-ACP as fatty acyl donor, but not acyl-CoA. The sequence is that of Phosphate acyltransferase from Dictyoglomus thermophilum (strain ATCC 35947 / DSM 3960 / H-6-12).